We begin with the raw amino-acid sequence, 372 residues long: Queuine tRNA-ribosyltransferase (372 aa).

The active-site Proton acceptor is the D89. Residues 89–93 (DSGGF), D143, Q185, and G212 contribute to the substrate site. The interval 243–249 (GVGKPED) is RNA binding. The active-site Nucleophile is the D262. The segment at 267 to 271 (TRNAR) is RNA binding; important for wobble base 34 recognition. Positions 300, 302, 305, and 331 each coordinate Zn(2+).

Belongs to the queuine tRNA-ribosyltransferase family. As to quaternary structure, homodimer. Within each dimer, one monomer is responsible for RNA recognition and catalysis, while the other monomer binds to the replacement base PreQ1. Requires Zn(2+) as cofactor.

It catalyses the reaction 7-aminomethyl-7-carbaguanine + guanosine(34) in tRNA = 7-aminomethyl-7-carbaguanosine(34) in tRNA + guanine. Its pathway is tRNA modification; tRNA-queuosine biosynthesis. Functionally, catalyzes the base-exchange of a guanine (G) residue with the queuine precursor 7-aminomethyl-7-deazaguanine (PreQ1) at position 34 (anticodon wobble position) in tRNAs with GU(N) anticodons (tRNA-Asp, -Asn, -His and -Tyr). Catalysis occurs through a double-displacement mechanism. The nucleophile active site attacks the C1' of nucleotide 34 to detach the guanine base from the RNA, forming a covalent enzyme-RNA intermediate. The proton acceptor active site deprotonates the incoming PreQ1, allowing a nucleophilic attack on the C1' of the ribose to form the product. After dissociation, two additional enzymatic reactions on the tRNA convert PreQ1 to queuine (Q), resulting in the hypermodified nucleoside queuosine (7-(((4,5-cis-dihydroxy-2-cyclopenten-1-yl)amino)methyl)-7-deazaguanosine). This chain is Queuine tRNA-ribosyltransferase, found in Chromohalobacter salexigens (strain ATCC BAA-138 / DSM 3043 / CIP 106854 / NCIMB 13768 / 1H11).